Consider the following 140-residue polypeptide: Nucleoside diphosphate kinase (140 aa).

ATP contacts are provided by Lys10, Phe58, Arg86, Thr92, Arg103, and Asn113. His116 (pros-phosphohistidine intermediate) is an active-site residue.

This sequence belongs to the NDK family. Homotetramer. Requires Mg(2+) as cofactor.

Its subcellular location is the cytoplasm. It carries out the reaction a 2'-deoxyribonucleoside 5'-diphosphate + ATP = a 2'-deoxyribonucleoside 5'-triphosphate + ADP. It catalyses the reaction a ribonucleoside 5'-diphosphate + ATP = a ribonucleoside 5'-triphosphate + ADP. Major role in the synthesis of nucleoside triphosphates other than ATP. The ATP gamma phosphate is transferred to the NDP beta phosphate via a ping-pong mechanism, using a phosphorylated active-site intermediate. This is Nucleoside diphosphate kinase from Anaplasma phagocytophilum (strain HZ).